The chain runs to 941 residues: Bifunctional glutamine synthetase adenylyltransferase/adenylyl-removing enzyme (941 aa).

Positions 1-431 (MSSAPPFAAA…TFRNAFRLAG (431 aa)) are adenylyl removase. An adenylyl transferase region spans residues 447-941 (NGHGMRPHAG…DGTIAQAEVK (495 aa)).

This sequence belongs to the GlnE family. Requires Mg(2+) as cofactor.

It carries out the reaction [glutamine synthetase]-O(4)-(5'-adenylyl)-L-tyrosine + phosphate = [glutamine synthetase]-L-tyrosine + ADP. The enzyme catalyses [glutamine synthetase]-L-tyrosine + ATP = [glutamine synthetase]-O(4)-(5'-adenylyl)-L-tyrosine + diphosphate. In terms of biological role, involved in the regulation of glutamine synthetase GlnA, a key enzyme in the process to assimilate ammonia. When cellular nitrogen levels are high, the C-terminal adenylyl transferase (AT) inactivates GlnA by covalent transfer of an adenylyl group from ATP to specific tyrosine residue of GlnA, thus reducing its activity. Conversely, when nitrogen levels are low, the N-terminal adenylyl removase (AR) activates GlnA by removing the adenylyl group by phosphorolysis, increasing its activity. The regulatory region of GlnE binds the signal transduction protein PII (GlnB) which indicates the nitrogen status of the cell. This chain is Bifunctional glutamine synthetase adenylyltransferase/adenylyl-removing enzyme, found in Bordetella bronchiseptica (strain ATCC BAA-588 / NCTC 13252 / RB50) (Alcaligenes bronchisepticus).